Here is a 368-residue protein sequence, read N- to C-terminus: DNA-directed RNA polymerase II subunit GRINL1A (368 aa).

The segment at 29-68 (KRQERLLRNEKFICKLPDKGKKIFDSFAKLKAAIAECEEV) is important for transcription repressor activity. Polar residues-rich tracts occupy residues 116 to 131 (SSVD…QNQG), 205 to 224 (GEQQ…LSSG), and 258 to 273 (QNDS…SPIS). Disordered stretches follow at residues 116 to 186 (SSVD…DTSS), 203 to 227 (DQGE…GTEK), and 255 to 282 (PFRQ…RRDK). Residues 227–298 (KKPHYMEVLE…TAARLLPLHH (72 aa)) form an interaction with Pol II region. Ser-270 carries the post-translational modification Phosphoserine. Positions 299–314 (MPTQLLSIEESLALQK) are important for transcription repressor activity. Residues 301–335 (TQLLSIEESLALQKQQKQNYEEMQAKLAAQKLAER) adopt a coiled-coil conformation. Residues 315 to 340 (QQKQNYEEMQAKLAAQKLAERLNIKM) are interaction with Pol II. A disordered region spans residues 339-368 (KMRSYNPEGESSGRYREVRDEDDDWSSDEF). The segment covering 358 to 368 (DEDDDWSSDEF) has biased composition (acidic residues).

This sequence belongs to the GRINL1 family. As to quaternary structure, component of the Pol II(G) complex, which contains the RNA polymerase II (Pol II) core complex subunits and POLR2M isoform 1. Pol II(G) appears to be an abundant form of Pol II. Dephosphorylated at Ser-270 by the PNUTS-PP1 complex, promoting RNA polymerase II transcription pause-release. Detected in adult an fetal brain. Detected in heart, kidney, skeletal muscle, small intestine, lung, prostate and testis.

The protein localises to the nucleus. Functionally, appears to be a stable component of the Pol II(G) complex form of RNA polymerase II (Pol II). Pol II synthesizes mRNA precursors and many functional non-coding RNAs and is the central component of the basal RNA polymerase II transcription machinery. May play a role in the Mediator complex-dependent regulation of transcription activation. Acts as a negative regulator of transcriptional activation; this repression is relieved by the Mediator complex, which restores Pol II(G) activator-dependent transcription to a level equivalent to that of Pol II. The protein is DNA-directed RNA polymerase II subunit GRINL1A (POLR2M) of Homo sapiens (Human).